We begin with the raw amino-acid sequence, 357 residues long: Protein RecA (357 aa).

Glycine 67–threonine 74 is an ATP binding site. Positions leucine 335 to phenylalanine 357 are disordered.

It belongs to the RecA family.

The protein localises to the cytoplasm. Functionally, can catalyze the hydrolysis of ATP in the presence of single-stranded DNA, the ATP-dependent uptake of single-stranded DNA by duplex DNA, and the ATP-dependent hybridization of homologous single-stranded DNAs. It interacts with LexA causing its activation and leading to its autocatalytic cleavage. The chain is Protein RecA from Shewanella sp. (strain MR-4).